A 158-amino-acid chain; its full sequence is Protein Smg homolog (158 aa).

This sequence belongs to the Smg family.

The polypeptide is Protein Smg homolog (Coxiella burnetii (strain RSA 331 / Henzerling II)).